The following is a 462-amino-acid chain: NEDD8-activating enzyme E1 catalytic subunit (462 aa).

Ala-2 carries the N-acetylalanine modification. An interaction with UBE2M N-terminus region spans residues 53 to 70 (HPDFEPSTESLQFLLDTC). ATP is bound by residues 100–124 (DMDT…GRPK) and 148–171 (IQDF…SIIA). 2 interaction with UBE2M N-terminus regions span residues 157 to 161 (RQFHI) and 192 to 217 (PSSI…LPGM). Residues 227 to 229 (LYP) are interaction with NEDD8. Cys-237 acts as the Glycyl thioester intermediate in catalysis. 2 interaction with NAE1 regions span residues 242 to 248 (MPRLPEH) and 292 to 295 (YNIR). Residues 331 to 338 (IATSAYIP) form an interaction with UBE2M N-terminus region. Positions 352–357 (YTYTFE) are interaction with NEDD8. The tract at residues 368-462 (SQLPQNIQFS…QTVLFKLHFT (95 aa)) is interaction with UBE2M core domain.

The protein belongs to the ubiquitin-activating E1 family. UBA3 subfamily. In terms of assembly, heterodimer of UBA3 and NAE1. Interacts with NEDD8, UBE2F and UBE2M. Binds ESR1 and ESR2 with bound steroid ligand. Interacts with TBATA.

The enzyme catalyses ATP + [NEDD8 protein] + [E1 NEDD8-activating enzyme]-L-cysteine = AMP + diphosphate + [E1 NEDD8-activating enzyme]-S-[NEDD8 protein]-yl-L-cysteine.. The protein operates within protein modification; protein neddylation. With respect to regulation, binding of TP53BP2 to the regulatory subunit NAE1 decreases activity. In terms of biological role, catalytic subunit of the dimeric UBA3-NAE1 E1 enzyme. E1 activates NEDD8 by first adenylating its C-terminal glycine residue with ATP, thereafter linking this residue to the side chain of the catalytic cysteine, yielding a NEDD8-UBA3 thioester and free AMP. E1 finally transfers NEDD8 to the catalytic cysteine of UBE2M. Down-regulates steroid receptor activity. Necessary for cell cycle progression. This chain is NEDD8-activating enzyme E1 catalytic subunit (Uba3), found in Mus musculus (Mouse).